The primary structure comprises 626 residues: Hemocyanin AA6 chain (626 aa).

Residues His170, His174, His201, His321, His325, and His361 each coordinate Cu cation. Ser374 carries the post-translational modification Phosphoserine.

Belongs to the tyrosinase family. Hemocyanin subfamily. In terms of assembly, scorpion hemocyanin is a 24-chain polymer with 8 different chains identified, assembled in hexameric substructures. Three disulfide bonds are present. In terms of tissue distribution, hemolymph.

The protein localises to the secreted. Its subcellular location is the extracellular space. Functionally, hemocyanins are copper-containing oxygen carriers occurring freely dissolved in the hemolymph of many mollusks and arthropods. The polypeptide is Hemocyanin AA6 chain (Androctonus australis (Sahara scorpion)).